We begin with the raw amino-acid sequence, 447 residues long: N-succinylarginine dihydrolase (447 aa).

Substrate-binding positions include Ala19–Ser28, Asn110, and His137–Arg138. The active site involves Glu174. A substrate-binding site is contributed by Arg212. The active site involves His248. Residues Asp250 and Asn359 each contribute to the substrate site. The active-site Nucleophile is the Cys365.

It belongs to the succinylarginine dihydrolase family. In terms of assembly, homodimer.

It carries out the reaction N(2)-succinyl-L-arginine + 2 H2O + 2 H(+) = N(2)-succinyl-L-ornithine + 2 NH4(+) + CO2. The protein operates within amino-acid degradation; L-arginine degradation via AST pathway; L-glutamate and succinate from L-arginine: step 2/5. Its function is as follows. Catalyzes the hydrolysis of N(2)-succinylarginine into N(2)-succinylornithine, ammonia and CO(2). The chain is N-succinylarginine dihydrolase from Salmonella paratyphi B (strain ATCC BAA-1250 / SPB7).